Consider the following 1040-residue polypeptide: MGEEGGSASHDEEERASVLLGHSPGCEMCSQEAFQAQRSQLVELLVSGSLEGFESVLDWLLSWEVLSWEDYEGFHLLGQPLSHLARRLLDTVWNKGTWACQKLIAAAQEAQADSQSPKLHGCWDPHSLHPARDLQSHRPAIVRRLHSHVENMLDLAWERGFVSQYECDEIRLPIFTPSQRARRLLDLATVKANGLAAFLLQHVQELPVPLALPLEAATCKKYMAKLRTTVSAQSRFLSTYDGAETLCLEDIYTENVLEVWADVGMAGPPQKSPATLGLEELFSTPGHLNDDADTVLVVGEAGSGKSTLLQRLHLLWAAGQDFQEFLFVFPFSCRQLQCMAKPLSVRTLLFEHCCWPDVGQEDIFQLLLDHPDRVLLTFDGFDEFKFRFTDRERHCSPTDPTSVQTLLFNLLQGNLLKNARKVVTSRPAAVSAFLRKYIRTEFNLKGFSEQGIELYLRKRHHEPGVADRLIRLLQETSALHGLCHLPVFSWMVSKCHQELLLQEGGSPKTTTDMYLLILQHFLLHATPPDSASQGLGPSLLRGRLPTLLHLGRLALWGLGMCCYVFSAQQLQAAQVSPDDISLGFLVRAKGVVPGSTAPLEFLHITFQCFFAAFYLALSADVPPALLRHLFNCGRPGNSPMARLLPTMCIQASEGKDSSVAALLQKAEPHNLQITAAFLAGLLSREHWGLLAECQTSEKALLRRQACARWCLARSLRKHFHSIPPAAPGEAKSVHAMPGFIWLIRSLYEMQEERLARKAARGLNVGHLKLTFCSVGPTECAALAFVLQHLRRPVALQLDYNSVGDIGVEQLLPCLGVCKALYLRDNNISDRGICKLIECALHCEQLQKLALFNNKLTDGCAHSMAKLLACRQNFLALRLGNNYITAAGAQVLAEGLRGNTSLQFLGFWGNRVGDEGAQALAEALGDHQSLRWLSLVGNNIGSVGAQALALMLAKNVMLEELCLEENHLQDEGVCSLAEGLKKNSSLKILKLSNNCITYLGAEALLQALERNDTILEVWLRGNTFSLEEVDKLGCRDTRLLL.

CARD domains follow at residues 26–122 (CEMC…LHGC) and 126–218 (HSLH…EAAT). The short motif at 63-77 (WEVLSWEDYEGFHLL) is the ATG16L1-binding motif element. ADP contacts are provided by Thr-239, Tyr-252, Thr-253, Gly-302, Ser-303, Gly-304, Lys-305, Ser-306, and Thr-307. The tract at residues 241–274 (DGAETLCLEDIYTENVLEVWADVGMAGPPQKSPA) is required for CARD9 binding. The 326-residue stretch at 293–618 (DTVLVVGEAG…FFAAFYLALS (326 aa)) folds into the NACHT domain. 299–306 (GEAGSGKS) lines the ATP pocket. The S-palmitoyl cysteine moiety is linked to residue Cys-395. His-603 contacts ADP. 9 LRR repeats span residues 791 to 812 (RPVALQLDYNSVGDIGVEQLLP), 816 to 839 (VCKALYLRDNNISDRGICKLIECA), 844 to 865 (QLQKLALFNNKLTDGCAHSMAK), 872 to 884 (NFLALRLGNNYIT), 900 to 920 (SLQFLGFWGNRVGDEGAQALA), 928 to 949 (SLRWLSLVGNNIGSVGAQALAL), 956 to 976 (MLEELCLEENHLQDEGVCSLA), 984 to 1005 (SLKILKLSNNCITYLGAEALLQ), and 1012 to 1032 (TILEVWLRGNTFSLEEVDKLG). Cys-1033 is lipidated: S-palmitoyl cysteine.

This sequence belongs to the NOD1-NOD2 family. As to quaternary structure, homooligomer: homooligomerizes following muramyl dipeptide (MDP)-binding, promoting RIPK2 recruitment. Interacts (via CARD domain) with RIPK2 (via CARD domain). Following RIPK2 recruitment, RIPK2 homooligomerizes via its CARD domain and forms long filaments named RIPosomes. Interacts (via CARD domain) with ubiquitin; inhibiting interaction with RIPK2. Component of a signaling complex consisting of ARHGEF2, NOD2 and RIPK2. Interacts with ANKRD17 (via N-terminus). Interacts with HSPA1A; the interaction enhances NOD2 stability. Interacts (via both CARD domains) with HSP90; the interaction enhances NOD2 stability. Interacts (via CARD domain) with SOCS3; the interaction promotes NOD2 degradation. Interacts (via CARD domain) with ERBIN; the interaction inhibits activation of NOD2. Interacts with MAPKBP1; the interaction is enhanced in the presence of muramyl dipeptide (MDP) and inhibits NOD2 homooligomerization and activation. Interacts with INAVA; the interaction takes place upon Pattern recognition receptor (PRR) stimulation. Interacts (via NACHT domain) with CARD9. Interacts (via CARD domain) with CASP1; this interaction leads to IL1B processing. Also interacts with CASP4. Interacts with NLRP1; this interaction is enhanced in the presence of muramyl dipeptide (MDP) and leads to increased IL1B release. Interacts with NLRP12; this interaction promotes degradation of NOD2 through the ubiquitin-proteasome pathway. Interacts with ANKHD1, C10orf67, CHMP5, DOCK7, ENTR1, KRT15, LDOC1, PPP1R12C, PPP2R3B, TRIM41 and VIM. Interacts with MAVS; interaction takes place following single-stranded RNA (ssRNA)-binding. Interacts with ATG16L1. Interacts with IRGM; promoting IRGM 'Lys-63'-linked polyubiquitination, which is required for interactions with the core autophagy factors. Palmitoylated by ZDHHC5; palmitoylation is required for proper recruitment to the bacterial entry site and hence for proper signaling upon cognate peptidoglycan detection. Palmitoylation promotes localization to the cell membrane. Palmitoylation protects from SQSTM1/p62-dependent autophagic degradation. Post-translationally, polyubiquitinated by TRIM27, leading to proteasome-mediated degradation. Polyubiquitinated and degraded following muramyl dipeptide (MDP) stimulation, conferring MDP tolerance and preventing septic shock. In terms of processing, degraded via selective autophagy following interaction with IRGM. IRGM promotes NOD2-RIPK2 RIPosome recruitment to autophagosome membranes, promoting their SQSTM1/p62-dependent autophagic degradation. O-glycosylated by OGT, O-GlcNAcylation increases protein stability. In terms of tissue distribution, expressed in monocytes, macrophages, dendritic cells, hepatocytes, preadipocytes, epithelial cells of oral cavity, lung and intestine, with higher expression in ileal Paneth cells and in intestinal stem cells. Expressed at higher level in leukocytes.

It localises to the cell membrane. The protein localises to the basolateral cell membrane. The protein resides in the cytoplasm. Its subcellular location is the mitochondrion. ADP-binding promotes an inactive closed conformation. Pattern recognition receptor (PRR) that detects bacterial peptidoglycan fragments and other danger signals and plays an important role in gastrointestinal immunity. Specifically activated by muramyl dipeptide (MDP), a fragment of bacterial peptidoglycan found in every bacterial peptidoglycan type. NOD2 specifically recognizes and binds 6-O-phospho-MDP, the phosphorylated form of MDP, which is generated by NAGK. 6-O-phospho-MDP-binding triggers oligomerization that facilitates the binding and subsequent activation of the proximal adapter receptor-interacting RIPK2. Following recruitment, RIPK2 undergoes 'Met-1'- (linear) and 'Lys-63'-linked polyubiquitination by E3 ubiquitin-protein ligases XIAP, BIRC2, BIRC3 and the LUBAC complex, becoming a scaffolding protein for downstream effectors, triggering activation of the NF-kappa-B and MAP kinases signaling. This in turn leads to the transcriptional activation of hundreds of genes involved in immune response. Its ability to detect bacterial MDP plays a central role in maintaining the equilibrium between intestinal microbiota and host immune responses to control inflammation. An imbalance in this relationship results in dysbiosis, whereby pathogenic bacteria prevail on commensals, causing damage in the intestinal epithelial barrier as well as allowing bacterial invasion and inflammation. Acts as a regulator of appetite by sensing MDP in a subset of brain neurons: microbiota-derived MDP reach the brain, where they bind and activate NOD2 in inhibitory hypothalamic neurons, decreasing neuronal activity, thereby regulating satiety and body temperature. NOD2-dependent MDP-sensing of bacterial cell walls in the intestinal epithelial compartment contributes to sustained postnatal growth upon undernutrition. Also plays a role in antiviral response by acting as a sensor of single-stranded RNA (ssRNA) from viruses: upon ssRNA-binding, interacts with MAVS, leading to activation of interferon regulatory factor-3/IRF3 and expression of type I interferon. Also acts as a regulator of autophagy in dendritic cells via its interaction with ATG16L1, possibly by recruiting ATG16L1 at the site of bacterial entry. NOD2 activation in the small intestine crypt also contributes to intestinal stem cells survival and function: acts by promoting mitophagy via its association with ATG16L1. In addition to its main role in innate immunity, also regulates the adaptive immune system by acting as regulator of helper T-cell and regulatory T-cells (Tregs). Besides recognizing pathogens, also involved in the endoplasmic reticulum stress response: acts by sensing and binding to the cytosolic metabolite sphingosine-1-phosphate generated in response to endoplasmic reticulum stress, initiating an inflammation process that leads to activation of the NF-kappa-B and MAP kinases signaling. May also be involved in NLRP1 activation following activation by MDP, leading to CASP1 activation and IL1B release in macrophages. Its function is as follows. Acts as a pattern recognition receptor (PRR); able to activate NF-kappa-B. Functionally, can activate NF-kappa-B in a muramyl dipeptide (MDP)-independent manner. This Homo sapiens (Human) protein is Nucleotide-binding oligomerization domain-containing protein 2.